The primary structure comprises 381 residues: Acetylornithine deacetylase (381 aa).

A Zn(2+)-binding site is contributed by His-78. The active site involves Asp-80. Asp-110 is a binding site for Zn(2+). Glu-142 is a catalytic residue. Positions 143, 167, and 353 each coordinate Zn(2+).

This sequence belongs to the peptidase M20A family. ArgE subfamily. In terms of assembly, homodimer. The cofactor is Zn(2+). Co(2+) serves as cofactor. Glutathione is required as a cofactor.

Its subcellular location is the cytoplasm. The enzyme catalyses N(2)-acetyl-L-ornithine + H2O = L-ornithine + acetate. It functions in the pathway amino-acid biosynthesis; L-arginine biosynthesis; L-ornithine from N(2)-acetyl-L-ornithine (linear): step 1/1. Functionally, catalyzes the hydrolysis of the amide bond of N(2)-acetylated L-amino acids. Cleaves the acetyl group from N-acetyl-L-ornithine to form L-ornithine, an intermediate in L-arginine biosynthesis pathway, and a branchpoint in the synthesis of polyamines. This is Acetylornithine deacetylase from Moritella profunda.